Reading from the N-terminus, the 122-residue chain is Large ribosomal subunit protein uL14 (122 aa).

Belongs to the universal ribosomal protein uL14 family. In terms of assembly, part of the 50S ribosomal subunit. Forms a cluster with proteins L3 and L19. In the 70S ribosome, L14 and L19 interact and together make contacts with the 16S rRNA in bridges B5 and B8.

Its function is as follows. Binds to 23S rRNA. Forms part of two intersubunit bridges in the 70S ribosome. This chain is Large ribosomal subunit protein uL14, found in Thermus aquaticus.